Consider the following 365-residue polypeptide: tRNA/tmRNA (uracil-C(5))-methyltransferase (365 aa).

S-adenosyl-L-methionine-binding residues include Gln189, Tyr217, Asn222, Glu238, and Asp298. The active-site Nucleophile is Cys323. Catalysis depends on Glu357, which acts as the Proton acceptor.

It belongs to the class I-like SAM-binding methyltransferase superfamily. RNA M5U methyltransferase family. TrmA subfamily.

The catalysed reaction is uridine(54) in tRNA + S-adenosyl-L-methionine = 5-methyluridine(54) in tRNA + S-adenosyl-L-homocysteine + H(+). The enzyme catalyses uridine(341) in tmRNA + S-adenosyl-L-methionine = 5-methyluridine(341) in tmRNA + S-adenosyl-L-homocysteine + H(+). In terms of biological role, dual-specificity methyltransferase that catalyzes the formation of 5-methyluridine at position 54 (m5U54) in all tRNAs, and that of position 341 (m5U341) in tmRNA (transfer-mRNA). The polypeptide is tRNA/tmRNA (uracil-C(5))-methyltransferase (Saccharophagus degradans (strain 2-40 / ATCC 43961 / DSM 17024)).